A 199-amino-acid polypeptide reads, in one-letter code: Peroxisomal membrane protein PEX17 (199 aa).

The protein resides in the peroxisome membrane. In terms of biological role, component of the peroxisomal translocation machinery with PEX13 and PEX14. Interacts indirectly with the PTS1 receptor (PAS10/PEX5) and directly binds to PEX14. Required for import of both PTS1 and PTS2 proteins. The sequence is that of Peroxisomal membrane protein PEX17 (PEX17) from Saccharomyces cerevisiae (strain ATCC 204508 / S288c) (Baker's yeast).